A 149-amino-acid chain; its full sequence is 3-dehydroquinate dehydratase (149 aa).

The Proton acceptor role is filled by Tyr26. Substrate is bound by residues Asn75, His81, and Asp88. His101 acts as the Proton donor in catalysis. Substrate-binding positions include 102-103 (LS) and Arg112.

This sequence belongs to the type-II 3-dehydroquinase family. As to quaternary structure, homododecamer.

It carries out the reaction 3-dehydroquinate = 3-dehydroshikimate + H2O. Its pathway is metabolic intermediate biosynthesis; chorismate biosynthesis; chorismate from D-erythrose 4-phosphate and phosphoenolpyruvate: step 3/7. In terms of biological role, catalyzes a trans-dehydration via an enolate intermediate. The polypeptide is 3-dehydroquinate dehydratase (Shewanella woodyi (strain ATCC 51908 / MS32)).